Here is a 243-residue protein sequence, read N- to C-terminus: Pyridoxine 5'-phosphate synthase (243 aa).

Asn9 contributes to the 3-amino-2-oxopropyl phosphate binding site. Asp11–His12 serves as a coordination point for 1-deoxy-D-xylulose 5-phosphate. Arg20 contributes to the 3-amino-2-oxopropyl phosphate binding site. His45 serves as the catalytic Proton acceptor. 2 residues coordinate 1-deoxy-D-xylulose 5-phosphate: Arg47 and His52. The Proton acceptor role is filled by Glu72. Residue Thr102 participates in 1-deoxy-D-xylulose 5-phosphate binding. The active-site Proton donor is His193. Residues Gly194 and Gly215 to His216 contribute to the 3-amino-2-oxopropyl phosphate site.

The protein belongs to the PNP synthase family. Homooctamer; tetramer of dimers.

The protein resides in the cytoplasm. It catalyses the reaction 3-amino-2-oxopropyl phosphate + 1-deoxy-D-xylulose 5-phosphate = pyridoxine 5'-phosphate + phosphate + 2 H2O + H(+). Its pathway is cofactor biosynthesis; pyridoxine 5'-phosphate biosynthesis; pyridoxine 5'-phosphate from D-erythrose 4-phosphate: step 5/5. Catalyzes the complicated ring closure reaction between the two acyclic compounds 1-deoxy-D-xylulose-5-phosphate (DXP) and 3-amino-2-oxopropyl phosphate (1-amino-acetone-3-phosphate or AAP) to form pyridoxine 5'-phosphate (PNP) and inorganic phosphate. The protein is Pyridoxine 5'-phosphate synthase of Escherichia coli O6:H1 (strain CFT073 / ATCC 700928 / UPEC).